The following is a 542-amino-acid chain: Chloride channel CLIC-like protein 1 (542 aa).

Positions M1–A18 are cleaved as a signal peptide. The Lumenal portion of the chain corresponds to H19–N184. A helical membrane pass occupies residues V185 to T205. Over Y206–V216 the chain is Cytoplasmic. A helical transmembrane segment spans residues F217–F237. Over A238–E329 the chain is Lumenal. A helical transmembrane segment spans residues I330–C350. Topologically, residues Y351–G542 are cytoplasmic. Positions E369 to G394 are disordered. Basic and acidic residues predominate over residues G377–P389. Phosphoserine is present on residues S438 and S464. Positions A452–G542 are disordered. Over residues E480–S491 the composition is skewed to low complexity. T482 carries the phosphothreonine modification. S532 carries the phosphoserine modification.

The protein belongs to the chloride channel MCLC family. In terms of assembly, homomultimers. Interacts with mitochondrial protein PIGBOS1 (via C-terminus); the interaction occurs at the mitochondria-associated endoplasmic reticulum (ER) membrane, a zone of contact between the ER and mitochondrial membranes, but does not appear to play a role in ER-mitochondria tethering and is not affected by ER stress. Interacts with CALR.

The protein resides in the endoplasmic reticulum membrane. It catalyses the reaction chloride(in) = chloride(out). The catalysed reaction is bromide(in) = bromide(out). The enzyme catalyses nitrate(in) = nitrate(out). It carries out the reaction fluoride(in) = fluoride(out). Functionally, anion-selective channel with Ca(2+)-dependent and voltage-independent gating. Permeable to small monovalent anions with selectivity for bromide &gt; chloride &gt; nitrate &gt; fluoride. Operates in the endoplasmic reticulum (ER) membrane where it mediates chloride efflux to compensate for the loss of positive charges from the ER lumen upon Ca(2+) release. Contributes to the maintenance of ER Ca(2+) pools and activation of unfolded protein response to prevent accumulation of misfolded proteins in the ER lumen. Particularly involved in ER homeostasis mechanisms underlying motor neurons and retinal photoreceptors survival. The sequence is that of Chloride channel CLIC-like protein 1 (CLCC1) from Bos taurus (Bovine).